The sequence spans 841 residues: Homeobox-leucine zipper protein ATHB-9 (841 aa).

Residues 1 to 18 (MMAHHSMDDRDSPDKGFD) are compositionally biased toward basic and acidic residues. The segment at 1–21 (MMAHHSMDDRDSPDKGFDSGK) is disordered. The homeobox DNA-binding region spans 18–81 (DSGKYVRYTP…NRRCREKQRK (64 aa)). Residues 85-118 (RLQTVNRKLSAMNKLLMEENDRLQKQVSNLVYEN) adopt a coiled-coil conformation. 2 disordered regions span residues 140–162 (VVVS…RDVN) and 602–630 (DQKT…TKTD). Residues 145-155 (QQRQQQNPTHQ) show a composition bias toward low complexity. The START domain maps to 160 to 388 (DVNNPANLLS…IAQETSGEVQ (229 aa)). Polar residues predominate over residues 603–614 (QKTNPNDHQSAS).

It belongs to the HD-ZIP homeobox family. Class III subfamily. Binds DNA as homodimer. Interacts with ESR1 and ESR2. Interacts with ZPR3.

It is found in the nucleus. In terms of biological role, probable transcription factor involved in the determination of adaxial-abaxial polarity in ovule primordium. Specifies adaxial leaf fates. Binds to the DNA sequence 5'-GTAAT[GC]ATTAC-3'. In Arabidopsis thaliana (Mouse-ear cress), this protein is Homeobox-leucine zipper protein ATHB-9 (ATHB-9).